A 944-amino-acid chain; its full sequence is 2-oxoglutarate dehydrogenase E1 component (944 aa).

The tract at residues 915 to 944 (RRRSSPAEGDPTVHKKEQERIVSDSLTRKN) is disordered. Over residues 925–936 (PTVHKKEQERIV) the composition is skewed to basic and acidic residues.

Belongs to the alpha-ketoglutarate dehydrogenase family. In terms of assembly, homodimer. Part of the 2-oxoglutarate dehydrogenase (OGDH) complex composed of E1 (2-oxoglutarate dehydrogenase), E2 (dihydrolipoamide succinyltransferase) and E3 (dihydrolipoamide dehydrogenase); the complex contains multiple copies of the three enzymatic components (E1, E2 and E3). Thiamine diphosphate is required as a cofactor.

The enzyme catalyses N(6)-[(R)-lipoyl]-L-lysyl-[protein] + 2-oxoglutarate + H(+) = N(6)-[(R)-S(8)-succinyldihydrolipoyl]-L-lysyl-[protein] + CO2. Its function is as follows. E1 component of the 2-oxoglutarate dehydrogenase (OGDH) complex which catalyzes the decarboxylation of 2-oxoglutarate, the first step in the conversion of 2-oxoglutarate to succinyl-CoA and CO(2). The polypeptide is 2-oxoglutarate dehydrogenase E1 component (Bacillus velezensis (strain DSM 23117 / BGSC 10A6 / LMG 26770 / FZB42) (Bacillus amyloliquefaciens subsp. plantarum)).